Consider the following 79-residue polypeptide: MAKVINNRNRKPRKKVCILSAKGIEHVDYKDVELLQRFINNNNKIASRRVTGASARMQRRIANAIKRARFVGLLPYVKE.

This sequence belongs to the bacterial ribosomal protein bS18 family. Part of the 30S ribosomal subunit. Forms a tight heterodimer with protein bS6.

Functionally, binds as a heterodimer with protein bS6 to the central domain of the 16S rRNA, where it helps stabilize the platform of the 30S subunit. The sequence is that of Small ribosomal subunit protein bS18 from Ureaplasma urealyticum serovar 10 (strain ATCC 33699 / Western).